The following is a 120-amino-acid chain: Large ribosomal subunit protein uL18 (120 aa).

The protein belongs to the universal ribosomal protein uL18 family. Part of the 50S ribosomal subunit; part of the 5S rRNA/L5/L18/L25 subcomplex. Contacts the 5S and 23S rRNAs.

Its function is as follows. This is one of the proteins that bind and probably mediate the attachment of the 5S RNA into the large ribosomal subunit, where it forms part of the central protuberance. This chain is Large ribosomal subunit protein uL18, found in Clostridium novyi (strain NT).